We begin with the raw amino-acid sequence, 190 residues long: Dynein axonemal light chain 1 (190 aa).

4 LRR repeats span residues 49–70 (VCEKLSLSTNCIEKIANLNGLK), 71–92 (NLKILSLGRNNIKNLNGLEAVG), 94–115 (SLEELWISYNSIEKLKGIHVLK), and 116–137 (KLKVLLMSNNQVKDWGEFNKLQ). The 41-residue stretch at 150-190 (NPLEEKHSAEGDWQDRVTKSLKALKKLDGTPIIKNDEEEED) folds into the LRRCT domain.

It belongs to the dynein light chain LC1-type family. Interacts with DNAH5, a outer arm dynein heavy chain. Interacts with tubulin located within the A-tubule of the outer doublets in a ATP-independent manner.

It is found in the cytoplasm. The protein resides in the cytoskeleton. It localises to the cilium axoneme. In terms of biological role, part of the multisubunit axonemal ATPase complexes that generate the force for cilia motility and govern beat frequency. Component of the outer arm dynein (ODA). May be involved in a mechanosensory feedback mechanism controlling ODA activity based on external conformational cues by tethering the outer arm dynein heavy chain (DNAH5) to the microtubule within the axoneme. The chain is Dynein axonemal light chain 1 (DNAL1) from Ciona intestinalis (Transparent sea squirt).